A 496-amino-acid polypeptide reads, in one-letter code: Probable histidine ammonia-lyase (496 aa).

The 5-imidazolinone (Ala-Gly) cross-link spans 141–143 (ASG). The residue at position 142 (Ser142) is a 2,3-didehydroalanine (Ser).

It belongs to the PAL/histidase family. In terms of processing, contains an active site 4-methylidene-imidazol-5-one (MIO), which is formed autocatalytically by cyclization and dehydration of residues Ala-Ser-Gly.

The protein resides in the cytoplasm. It carries out the reaction L-histidine = trans-urocanate + NH4(+). It participates in amino-acid degradation; L-histidine degradation into L-glutamate; N-formimidoyl-L-glutamate from L-histidine: step 1/3. In Thermoplasma acidophilum (strain ATCC 25905 / DSM 1728 / JCM 9062 / NBRC 15155 / AMRC-C165), this protein is Probable histidine ammonia-lyase.